Reading from the N-terminus, the 237-residue chain is uncharacterized protein (237 aa).

The GP-PDE domain maps to 4 to 237; that stretch reads QFLIAHRGYS…VKFQIAAQLY (234 aa).

The protein to glycerophosphoryl diester phosphodiesterases (EC 3.1.4.46). It to M.genitalium MG293.

This is an uncharacterized protein from Mycoplasma pneumoniae (strain ATCC 29342 / M129 / Subtype 1) (Mycoplasmoides pneumoniae).